Consider the following 705-residue polypeptide: Ovotransferrin (705 aa).

The signal sequence occupies residues 1–19 (MKLILCTVLSLGIAAVCFA). 2 consecutive Transferrin-like domains span residues 26-352 (IRWC…SMRK) and 364-689 (IQWC…SLKT). Disulfide bonds link Cys-29-Cys-64 and Cys-39-Cys-55. The Fe(3+) site is built by Asp-79 and Tyr-111. Disulfide bonds link Cys-134-Cys-216, Cys-179-Cys-193, Cys-190-Cys-201, and Cys-247-Cys-261. 4 residues coordinate hydrogencarbonate: Thr-136, Arg-140, Ala-142, and Gly-143. Tyr-210 provides a ligand contact to Fe(3+). Residue His-269 coordinates Fe(3+). Positions 352–360 (KDQLTPSPR) are connecting region. Intrachain disulfides connect Cys-367–Cys-399 and Cys-377–Cys-390. Residues Asp-414 and Tyr-450 each contribute to the Fe(3+) site. Disulfide bonds link Cys-424-Cys-699, Cys-440-Cys-662, Cys-473-Cys-549, Cys-497-Cys-690, Cys-507-Cys-521, Cys-518-Cys-532, and Cys-589-Cys-603. Residues Thr-475, Arg-479, Ala-481, and Gly-482 each coordinate hydrogencarbonate. Asn-492 carries an N-linked (GlcNAc...) asparagine glycan. Tyr-543 serves as a coordination point for Fe(3+). Residue His-611 coordinates Fe(3+).

Belongs to the transferrin family. As to quaternary structure, monomer. Post-translationally, different forms of hen transferrin are distinguished by their carbohydrate composition. Ovotransferrin and embryo serum transferrin but not adult serum transferrin, have bisecting N-acetylglucosamine. Transferrin secreted by embryo hepatocytes in primary culture is marked by the presence of (alpha1-6) fucosylation of the core N-acetylglucosamine. Serum transferrins also differ in the number of attached neuraminic acid residues. In both embryo forms, sialylation occurs on the Man (alpha 1-3)-linked antennae. As to expression, expressed in the magnum of the oviduct (at protein level).

The protein localises to the secreted. Transferrins are iron binding transport proteins which can bind two Fe(3+) ions in association with the binding of an anion, usually bicarbonate. Responsible for the transport of iron from sites of absorption and heme degradation to those of storage and utilization. There are two forms of hen transferrin, ovotransferrin, found in the ovoducts and, serum transferrin, secreted by the liver. Serum transferrin may also have a role in stimulating cell proliferation and is regulated by iron levels. Ovotransferrin has a bacteriostatic function and, is not controlled by iron levels. The protein is Ovotransferrin of Gallus gallus (Chicken).